A 118-amino-acid polypeptide reads, in one-letter code: MRSAAAALHRLPARALIFLIELYRTYVSPTRMPVCRFTPTCSEYAVTALRTRGLVVGLGLTAVRLAKCAPWHPGGWDPVPQRRPRRRDAAAADAAMSAPHACKGSPHAVVGDTNDGST.

The interval 76-118 (WDPVPQRRPRRRDAAAADAAMSAPHACKGSPHAVVGDTNDGST) is disordered. The span at 91 to 101 (AADAAMSAPHA) shows a compositional bias: low complexity.

Belongs to the UPF0161 family.

The protein resides in the cell membrane. Functionally, could be involved in insertion of integral membrane proteins into the membrane. In Nocardia farcinica (strain IFM 10152), this protein is Putative membrane protein insertion efficiency factor.